The primary structure comprises 1136 residues: DNA-directed RNA polymerase I subunit RPA2 (1136 aa).

The interval 1–24 (MDPGSRWRNLPSGPSLKHLTDPSY) is disordered. Arg-180 serves as a coordination point for RNA. The loop B stretch occupies residues 194 to 208 (VRPKWKTRGPGYTHY). The interval 236–247 (LNFIYRKELFFL) is loop A. Asp-367 contacts RNA. 2 fork loop regions span residues 439–453 (LRSK…DSGL) and 474–489 (RGAD…VRRL). Residue Lys-890 coordinates RNA. DNA contacts are provided by Arg-1020 and Arg-1036. Residue Ser-1051 is modified to Phosphoserine. Positions 1071, 1074, 1099, and 1102 each coordinate Zn(2+). The segment at 1071–1102 (CVKCGSLLSPLLEKPPPSWSAMRNRKYNCTLC) adopts a C4-type zinc-finger fold.

The protein belongs to the RNA polymerase beta chain family. As to quaternary structure, component of the RNA polymerase I (Pol I) complex consisting of 13 subunits: a ten-subunit catalytic core composed of POLR1A/RPA1, POLR1B/RPA2, POLR1C/RPAC1, POLR1D/RPAC2, POLR1H/RPA12, POLR2E/RPABC1, POLR2F/RPABC2, POLR2H/RPABC3, POLR2K/RPABC4 and POLR2L/RPABC5; a mobile stalk subunit POLR1F/RPA43 protruding from the core and additional subunits homologous to general transcription factors POLR1E/RPA49 and POLR1G/RPA34. Part of Pol I pre-initiation complex (PIC), in which Pol I core assembles with RRN3 and promoter-bound UTBF and SL1/TIF-IB complex.

It localises to the nucleus. The protein localises to the nucleolus. It is found in the chromosome. It catalyses the reaction RNA(n) + a ribonucleoside 5'-triphosphate = RNA(n+1) + diphosphate. Functionally, catalytic core component of RNA polymerase I (Pol I), a DNA-dependent RNA polymerase which synthesizes ribosomal RNA precursors using the four ribonucleoside triphosphates as substrates. Transcribes 47S pre-rRNAs from multicopy rRNA gene clusters, giving rise to 5.8S, 18S and 28S ribosomal RNAs. Pol I-mediated transcription cycle proceeds through transcription initiation, transcription elongation and transcription termination stages. During transcription initiation, Pol I pre-initiation complex (PIC) is recruited by the selectivity factor 1 (SL1/TIF-IB) complex bound to the core promoter that precedes an rDNA repeat unit. The PIC assembly bends the promoter favoring the formation of the transcription bubble and promoter escape. Once the polymerase has escaped from the promoter it enters the elongation phase during which RNA is actively polymerized, based on complementarity with the template DNA strand. Highly processive, assembles in structures referred to as 'Miller trees' where many elongating Pol I complexes queue and transcribe the same rDNA coding regions. At terminator sequences downstream of the rDNA gene, PTRF interacts with Pol I and halts Pol I transcription leading to the release of the RNA transcript and polymerase from the DNA. Forms Pol I active center together with the largest subunit POLR1A/RPA1. Appends one nucleotide at a time to the 3' end of the nascent RNA, with POLR1A/RPA1 contributing a Mg(2+)-coordinating DxDGD motif, and POLR1B/RPA2 providing lysine residues believed to facilitate Watson-Crick base pairing between the incoming nucleotide and the template base. Typically, Mg(2+) ions direct a 5' nucleoside triphosphate to form a phosphodiester bond with the 3' hydroxyl of the preceding nucleotide of the nascent RNA, with the elimination of pyrophosphate. Has proofreading activity: Pauses and backtracks to allow the cleavage of a missincorporated nucleotide via POLR1H/RPA12. High Pol I processivity is associated with decreased transcription fidelity. This Pongo abelii (Sumatran orangutan) protein is DNA-directed RNA polymerase I subunit RPA2 (POLR1B).